A 353-amino-acid polypeptide reads, in one-letter code: Photosystem II D2 protein (353 aa).

Thr2 carries the N-acetylthreonine modification. A Phosphothreonine modification is found at Thr2. A helical transmembrane segment spans residues 41 to 61 (CAYFALGGWFTGTTFVTSWYT). A chlorophyll a-binding site is contributed by His118. Residues 125-141 (GFMLRQFELARSVQLRP) traverse the membrane as a helical segment. The pheophytin a site is built by Gln130 and Asn143. A helical transmembrane segment spans residues 153–166 (VFVSVFLIYPLGQS). Residue His198 participates in chlorophyll a binding. The chain crosses the membrane as a helical span at residues 208 to 228 (AALLCAIHGATVENTLFEDGD). Residues His215 and Phe262 each contribute to the a plastoquinone site. His215 contributes to the Fe cation binding site. His269 contributes to the Fe cation binding site. The chain crosses the membrane as a helical span at residues 279-295 (GLWMSAIGVVGLALNLR).

It belongs to the reaction center PufL/M/PsbA/D family. As to quaternary structure, PSII is composed of 1 copy each of membrane proteins PsbA, PsbB, PsbC, PsbD, PsbE, PsbF, PsbH, PsbI, PsbJ, PsbK, PsbL, PsbM, PsbT, PsbX, PsbY, PsbZ, Psb30/Ycf12, at least 3 peripheral proteins of the oxygen-evolving complex and a large number of cofactors. It forms dimeric complexes. It depends on The D1/D2 heterodimer binds P680, chlorophylls that are the primary electron donor of PSII, and subsequent electron acceptors. It shares a non-heme iron and each subunit binds pheophytin, quinone, additional chlorophylls, carotenoids and lipids. There is also a Cl(-1) ion associated with D1 and D2, which is required for oxygen evolution. The PSII complex binds additional chlorophylls, carotenoids and specific lipids. as a cofactor.

Its subcellular location is the plastid. The protein resides in the chloroplast thylakoid membrane. It carries out the reaction 2 a plastoquinone + 4 hnu + 2 H2O = 2 a plastoquinol + O2. Photosystem II (PSII) is a light-driven water:plastoquinone oxidoreductase that uses light energy to abstract electrons from H(2)O, generating O(2) and a proton gradient subsequently used for ATP formation. It consists of a core antenna complex that captures photons, and an electron transfer chain that converts photonic excitation into a charge separation. The D1/D2 (PsbA/PsbD) reaction center heterodimer binds P680, the primary electron donor of PSII as well as several subsequent electron acceptors. D2 is needed for assembly of a stable PSII complex. The chain is Photosystem II D2 protein from Oryza nivara (Indian wild rice).